The chain runs to 259 residues: 4-hydroxy-tetrahydrodipicolinate reductase (259 aa).

Residues 8-13, 94-96, and 120-123 each bind NAD(+); these read GFAGAM, GTT, and APNF. Histidine 150 functions as the Proton donor/acceptor in the catalytic mechanism. Histidine 151 is a binding site for (S)-2,3,4,5-tetrahydrodipicolinate. Catalysis depends on lysine 154, which acts as the Proton donor. Residue 160 to 161 participates in (S)-2,3,4,5-tetrahydrodipicolinate binding; sequence GT.

Belongs to the DapB family.

It localises to the cytoplasm. It catalyses the reaction (S)-2,3,4,5-tetrahydrodipicolinate + NAD(+) + H2O = (2S,4S)-4-hydroxy-2,3,4,5-tetrahydrodipicolinate + NADH + H(+). The catalysed reaction is (S)-2,3,4,5-tetrahydrodipicolinate + NADP(+) + H2O = (2S,4S)-4-hydroxy-2,3,4,5-tetrahydrodipicolinate + NADPH + H(+). Its pathway is amino-acid biosynthesis; L-lysine biosynthesis via DAP pathway; (S)-tetrahydrodipicolinate from L-aspartate: step 4/4. Catalyzes the conversion of 4-hydroxy-tetrahydrodipicolinate (HTPA) to tetrahydrodipicolinate. The polypeptide is 4-hydroxy-tetrahydrodipicolinate reductase (Limosilactobacillus fermentum (strain NBRC 3956 / LMG 18251) (Lactobacillus fermentum)).